The chain runs to 268 residues: MAAVRVLVASRLAAASAFTSLSPGGRTPSQRAALHLSVPRPAARVALVLSGCGVYDGTEIHEASAILVHLSRGGAEVQIFAPDVPQMHVIDHTKGQPSEGESRNVLTESARIARGKITDLANLSAANHDAAIFPGGFGAAKNLSTFAVDGKDCKVNKEVERVLKEFHQAGKPIGLCCIAPVLAAKVLRGVEVTVGHEQEEGGKWPYAGTAEAIKALGAKHCVKEVVEAHVDQKNKVVTTPAFMCETALHYIHDGIGAMVRKVLELTGK.

Residues 1–41 (MAAVRVLVASRLAAASAFTSLSPGGRTPSQRAALHLSVPRP) constitute a mitochondrion transit peptide. N6-acetyllysine is present on residues Lys-151, Lys-157, and Lys-164. Lys-203 carries the post-translational modification N6-acetyllysine; alternate. N6-succinyllysine; alternate is present on Lys-203. Lys-219 carries the N6-acetyllysine modification. Residues Lys-223 and Lys-233 each carry the N6-acetyllysine; alternate modification. N6-succinyllysine; alternate is present on residues Lys-223 and Lys-233.

It belongs to the GATD3 family.

It localises to the mitochondrion. This Homo sapiens (Human) protein is Glutamine amidotransferase-like class 1 domain-containing protein 3, mitochondrial.